The primary structure comprises 1218 residues: Chitin synthase 4 (1218 aa).

Disordered regions lie at residues 1 to 93 (MAEP…PERN) and 132 to 190 (TVSS…RRQK). Residues 14–34 (TRDKSHSPYRESPSRRLRDVE) are compositionally biased toward basic and acidic residues. An N-linked (GlcNAc...) asparagine glycan is attached at Asn-50. Composition is skewed to polar residues over residues 71 to 80 (SNPNPMSQSD) and 133 to 142 (VSSGSTQQDT). Residues 175 to 190 (RKDTRNLTEEEKRRQK) show a composition bias toward basic and acidic residues. An N-linked (GlcNAc...) asparagine glycan is attached at Asn-180. Transmembrane regions (helical) follow at residues 200-220 (IWNI…LQCF) and 235-255 (VGLI…TFGF). Residues Asn-365, Asn-404, and Asn-426 are each glycosylated (N-linked (GlcNAc...) asparagine). A helical membrane pass occupies residues 487-507 (VVLYVSLVFILAIVAAKFFLA). Disordered regions lie at residues 548–570 (PKIT…RGSM) and 582–606 (YAVD…AKLL). Residues 553-562 (PASTVTGSDG) show a composition bias toward polar residues. Asn-617, Asn-903, and Asn-1030 each carry an N-linked (GlcNAc...) asparagine glycan. A run of 3 helical transmembrane segments spans residues 1062–1082 (IGTL…IISI), 1087–1107 (VPVI…ILIV), and 1115–1135 (YILW…VLPA). Positions 1188–1218 (QANGSVWNQQPPTRPPSGYGSMHGFEPYRDY) are disordered. Residues 1189–1198 (ANGSVWNQQP) show a composition bias toward polar residues. A glycan (N-linked (GlcNAc...) asparagine) is linked at Asn-1190.

The protein belongs to the chitin synthase family. Class IV subfamily. Post-translationally, maximal activity requires trypsin activation, suggesting a zymogenic nature.

It is found in the cell membrane. It carries out the reaction [(1-&gt;4)-N-acetyl-beta-D-glucosaminyl](n) + UDP-N-acetyl-alpha-D-glucosamine = [(1-&gt;4)-N-acetyl-beta-D-glucosaminyl](n+1) + UDP + H(+). Activity is stimulated by Mg(2+), and is more inhibited by polyoxin D than by nikkomycin. Its function is as follows. Polymerizes chitin, a structural polymer of the cell wall and septum, by transferring the sugar moiety of UDP-GlcNAc to the non-reducing end of the growing chitin polymer. CHS4 synthesizes a large amount of chitin and appears to play a role in the process of cell separation. CHS4 is particularly well suited for functioning at the higher temperatures associated with its poorly characterized saprophic environment and with human infection. This is Chitin synthase 4 from Exophiala dermatitidis (strain ATCC 34100 / CBS 525.76 / NIH/UT8656) (Black yeast).